We begin with the raw amino-acid sequence, 112 residues long: UPF0102 protein JJD26997_0163 (112 aa).

It belongs to the UPF0102 family.

This Campylobacter jejuni subsp. doylei (strain ATCC BAA-1458 / RM4099 / 269.97) protein is UPF0102 protein JJD26997_0163.